Reading from the N-terminus, the 290-residue chain is 4-diphosphocytidyl-2-C-methyl-D-erythritol kinase (290 aa).

The active site involves K12. ATP is bound at residue P97–A107. Residue D139 is part of the active site.

Belongs to the GHMP kinase family. IspE subfamily.

It catalyses the reaction 4-CDP-2-C-methyl-D-erythritol + ATP = 4-CDP-2-C-methyl-D-erythritol 2-phosphate + ADP + H(+). Its pathway is isoprenoid biosynthesis; isopentenyl diphosphate biosynthesis via DXP pathway; isopentenyl diphosphate from 1-deoxy-D-xylulose 5-phosphate: step 3/6. Its function is as follows. Catalyzes the phosphorylation of the position 2 hydroxy group of 4-diphosphocytidyl-2C-methyl-D-erythritol. In Parvibaculum lavamentivorans (strain DS-1 / DSM 13023 / NCIMB 13966), this protein is 4-diphosphocytidyl-2-C-methyl-D-erythritol kinase.